The chain runs to 197 residues: Imidazoleglycerol-phosphate dehydratase (197 aa).

It belongs to the imidazoleglycerol-phosphate dehydratase family.

The protein localises to the cytoplasm. The enzyme catalyses D-erythro-1-(imidazol-4-yl)glycerol 3-phosphate = 3-(imidazol-4-yl)-2-oxopropyl phosphate + H2O. It functions in the pathway amino-acid biosynthesis; L-histidine biosynthesis; L-histidine from 5-phospho-alpha-D-ribose 1-diphosphate: step 6/9. This Xanthobacter autotrophicus (strain ATCC BAA-1158 / Py2) protein is Imidazoleglycerol-phosphate dehydratase.